The primary structure comprises 220 residues: Ras-related protein Rab-1 (220 aa).

GTP is bound at residue 14-21; sequence GDSGTGKS. The Effector region signature appears at 36–44; that stretch reads YMSTIGVDF. Residues 62 to 66 and 121 to 124 each bind GTP; these read DTAGQ and NKID. A lipid anchor (S-geranylgeranyl cysteine) is attached at Cys219.

This sequence belongs to the small GTPase superfamily. Rab family.

Its subcellular location is the cell membrane. Functionally, protein transport. Probably involved in vesicular traffic from ER to Golgi. The chain is Ras-related protein Rab-1 (rab1) from Theileria annulata.